The sequence spans 277 residues: MSRTAFFISDGTGITAETLGRSLLAQFEGVDLTLVVKPYIDTLEKAHDLAAIIAQTADRDGERPIVIDTIVDQSIRDIIAAAPGFKVDIFSTFLAPLEEELATHSTYTVGRTHAIGRDDVYMHRIDAVHFALDNDDGARTHQYDQADVILVGVSRCGKTPTSLYLALQFGIRAANYPLTEDDLDEDGVLNMPKALAPYRHKLFALTIDPRRLAAIRSERRPNSRYCSMDQCMQELQQAEALFRRYHIPYIDTTRFSIEEISTRMIAETHLTRRFSPR.

Gly-152–Thr-159 is a binding site for ADP.

It belongs to the pyruvate, phosphate/water dikinase regulatory protein family. PSRP subfamily.

It catalyses the reaction [pyruvate, water dikinase] + ADP = [pyruvate, water dikinase]-phosphate + AMP + H(+). It carries out the reaction [pyruvate, water dikinase]-phosphate + phosphate + H(+) = [pyruvate, water dikinase] + diphosphate. Its function is as follows. Bifunctional serine/threonine kinase and phosphorylase involved in the regulation of the phosphoenolpyruvate synthase (PEPS) by catalyzing its phosphorylation/dephosphorylation. The sequence is that of Putative phosphoenolpyruvate synthase regulatory protein from Chromohalobacter salexigens (strain ATCC BAA-138 / DSM 3043 / CIP 106854 / NCIMB 13768 / 1H11).